Here is a 1585-residue protein sequence, read N- to C-terminus: Adhesion G protein-coupled receptor B2 (1585 aa).

An N-terminal signal peptide occupies residues 1 to 32 (MENTGWMGKGHRMTPACPLLLSVILSLRLATA). The Extracellular segment spans residues 33–936 (FDPAPSACSA…ELAGSPSVPL (904 aa)). N-linked (GlcNAc...) asparagine glycans are attached at residues N106, N191, and N192. Low complexity predominate over residues 229 to 238 (AGAGSTTTTS). The interval 229 to 271 (AGAGSTTTTSPGPPAAHTLSNALVPGGPAPPAEADLHSGSSND) is disordered. O-linked (Xyl...) (chondroitin sulfate) serine glycosylation is present at S266. 4 consecutive TSP type-1 domains span residues 309-362 (DPAA…ATCP), 364-417 (HGVW…AACP), 419-472 (EGQW…LECP), and 475-528 (DSKW…KRCP). Disulfide bonds link C321-C355, C325-C361, C336-C345, C376-C411, C380-C416, C391-C401, C431-C466, C435-C471, C446-C456, C487-C522, C491-C527, C502-C512, C534-C569, and C557-C587. N-linked (GlcNAc...) asparagine glycosylation is present at N356. The N-linked (GlcNAc...) asparagine glycan is linked to N437. N560 and N645 each carry an N-linked (GlcNAc...) asparagine glycan. The region spanning 757-924 (DRLFLPKEVL…AVLAQPPKDL (168 aa)) is the GAIN-B domain. The disordered stretch occupies residues 767 to 806 (SLSSPGKPATSGAAGSPGRGRGPGTVPPGPGHSHQRLLPA). Low complexity predominate over residues 769-780 (SSPGKPATSGAA). A glycan (N-linked (GlcNAc...) asparagine) is linked at N867. Disulfide bonds link C874–C906 and C894–C908. The segment at 874–924 (CASWDYSRADASSGDWDTENCQTLETQAAHTRCQCQHLSTFAVLAQPPKDL) is GPS. The chain crosses the membrane as a helical span at residues 937–957 (VIGCAVSCMALLTLLAIYAAF). Over 958 to 965 (WRFIKSER) the chain is Cytoplasmic. A helical transmembrane segment spans residues 966-986 (SIILLNFCLSILASNILILVG). Residues 987–994 (QSRVLSKG) are Extracellular-facing. The helical transmembrane segment at 995–1015 (VCTMTAAFLHFFFLSSFCWVL) threads the bilayer. The Cytoplasmic portion of the chain corresponds to 1016–1036 (TEAWQSYLAVIGRMRTRLVRK). A helical transmembrane segment spans residues 1037–1057 (RFLCLGWGLPALVVAVSVGFT). The Extracellular portion of the chain corresponds to 1058–1078 (RTKGYGTSSYCWLSLEGGLLY). Residues 1079-1099 (AFVGPAAVIVLVNMLIGIIVF) form a helical membrane-spanning segment. Residues 1100 to 1121 (NKLMARDGISDKSKKQRAGSER) lie on the Cytoplasmic side of the membrane. The helical transmembrane segment at 1122–1142 (CPWASLLLPCSACGAVPSPLL) threads the bilayer. The Extracellular segment spans residues 1143–1153 (SSASARNAMAS). Residues 1154-1174 (LWSSCVVLPLLALTWMSAVLA) traverse the membrane as a helical segment. Over 1175 to 1585 (MTDRRSVLFQ…PPDGDFQTEV (411 aa)) the chain is Cytoplasmic. Position 1351 is a phosphotyrosine (Y1351). Disordered stretches follow at residues 1359–1385 (LSLQ…PRRA), 1423–1454 (FQPP…GSTM), and 1498–1585 (YRSQ…QTEV). Positions 1372–1382 (DAPRARPEGTP) are enriched in basic and acidic residues. Over residues 1543-1552 (SWSTFKSMTL) the composition is skewed to polar residues. Acidic residues predominate over residues 1575-1585 (EPPDGDFQTEV).

It belongs to the G-protein coupled receptor 2 family. Adhesion G-protein coupled receptor (ADGR) subfamily. Heterodimer of 2 chains generated by proteolytic processing; the large extracellular N-terminal fragment and the membrane-bound C-terminal fragment predominantly remain associated and non-covalently linked. Interacts with GABPB2. Interacts (via carboxy-terminus) with TAX1BP3. Interacts with GNAZ. Interacts with SH3GL2. In terms of processing, glycosylated. Post-translationally, autoproteolytically processed at the GPS region of the GAIN-B domain; this cleavage modulates receptor activity. Additionally, furin is involved in the cleavage at another site, in the middle of the extracellular domain, generating a soluble fragment. As to expression, detected in cerebrospinal fluid (at protein level). Strongly expressed in brain. Also detected in heart, thymus, skeletal muscle, and different cell lines.

The protein resides in the cell membrane. It localises to the secreted. With respect to regulation, receptor activity is regulated by proteolytic processing. The long N-terminal has a an inhibitory effect on the constitutive signaling activity. Removal of the N-terminal region induces an increase of the receptor activity. Its function is as follows. Orphan G-protein coupled receptor involved in cell adhesion and probably in cell-cell interactions. Activates NFAT-signaling pathway, a transcription factor, via the G-protein GNAZ. Involved in angiogenesis inhibition. The polypeptide is Adhesion G protein-coupled receptor B2 (Homo sapiens (Human)).